Reading from the N-terminus, the 89-residue chain is UPF0297 protein MGAS9429_Spy1808 (89 aa).

The protein belongs to the UPF0297 family.

This Streptococcus pyogenes serotype M12 (strain MGAS9429) protein is UPF0297 protein MGAS9429_Spy1808.